The chain runs to 399 residues: Stearoyl-[acyl-carrier-protein] 9-desaturase, chloroplastic (399 aa).

The segment covering M1–F12 has biased composition (polar residues). A chloroplast-targeting transit peptide spans M1–M35. The tract at residues M1–P57 is disordered. Fe cation is bound by residues E141, E179, H182, E232, E265, and H268.

The protein belongs to the fatty acid desaturase type 2 family. As to quaternary structure, homodimer. The cofactor is Fe(2+).

It is found in the plastid. Its subcellular location is the chloroplast. The catalysed reaction is octadecanoyl-[ACP] + 2 reduced [2Fe-2S]-[ferredoxin] + O2 + 2 H(+) = (9Z)-octadecenoyl-[ACP] + 2 oxidized [2Fe-2S]-[ferredoxin] + 2 H2O. It functions in the pathway lipid metabolism; fatty acid metabolism. In terms of biological role, converts stearoyl-ACP to oleoyl-ACP by introduction of a cis double bond between carbons 9 and 10 of the acyl chain. This is Stearoyl-[acyl-carrier-protein] 9-desaturase, chloroplastic from Spinacia oleracea (Spinach).